The sequence spans 297 residues: Homoserine kinase (297 aa).

79-89 (PIARGLGSSGA) contributes to the ATP binding site.

The protein belongs to the GHMP kinase family. Homoserine kinase subfamily.

It localises to the cytoplasm. It catalyses the reaction L-homoserine + ATP = O-phospho-L-homoserine + ADP + H(+). It functions in the pathway amino-acid biosynthesis; L-threonine biosynthesis; L-threonine from L-aspartate: step 4/5. Its function is as follows. Catalyzes the ATP-dependent phosphorylation of L-homoserine to L-homoserine phosphate. The sequence is that of Homoserine kinase from Pyrobaculum aerophilum (strain ATCC 51768 / DSM 7523 / JCM 9630 / CIP 104966 / NBRC 100827 / IM2).